We begin with the raw amino-acid sequence, 382 residues long: Transforming growth factor beta-1 proprotein (382 aa).

The signal sequence occupies residues 1–21 (MEVLWMLLVLLVLHLSSLAMS). Positions 22–65 (LSTCKAVDMEEVRKRRIEAIRGQILSKLKLDKTPDVDSEKMTVP) are straightjacket domain. An arm domain region spans residues 66-263 (SEAIFLYNST…SMPAERIDTV (198 aa)). N-linked (GlcNAc...) asparagine glycosylation is found at Asn-73, Asn-123, and Asn-166. Residues 218–242 (PTPQAKDIDIEGFPALRGDLASLSS) are bowtie tail. The Cell attachment site signature appears at 234–236 (RGD). 4 cysteine pairs are disulfide-bonded: Cys-277–Cys-286, Cys-285–Cys-348, Cys-314–Cys-379, and Cys-318–Cys-381.

The protein belongs to the TGF-beta family. As to quaternary structure, latency-associated peptide: Homodimer; disulfide-linked. Latency-associated peptide: Interacts with Transforming growth factor beta-1 (TGF-beta-1) chain; interaction is non-covalent and maintains (TGF-beta-1) in a latent state; each Latency-associated peptide (LAP) monomer interacts with TGF-beta-1 in the other monomer. Transforming growth factor beta-1: Homodimer; disulfide-linked. Transforming growth factor beta-1: Interacts with TGF-beta receptors (tgfbr1 and tgfbr2), leading to signal transduction. In terms of processing, transforming growth factor beta-1 proprotein: The precursor proprotein is cleaved in the Golgi apparatus to form Transforming growth factor beta-1 (TGF-beta-1) and Latency-associated peptide (LAP) chains, which remain non-covalently linked, rendering TGF-beta-1 inactive.

The protein resides in the secreted. It is found in the extracellular space. The protein localises to the extracellular matrix. In terms of biological role, transforming growth factor beta-1 proprotein: Precursor of the Latency-associated peptide (LAP) and Transforming growth factor beta-1 (TGF-beta-1) chains, which constitute the regulatory and active subunit of TGF-beta-1, respectively. Its function is as follows. Required to maintain the Transforming growth factor beta-1 (TGF-beta-1) chain in a latent state during storage in extracellular matrix. Associates non-covalently with TGF-beta-1 and regulates its activation via interaction with 'milieu molecules', such as LTBP1, LRRC32/GARP and LRRC33/NRROS, that control activation of TGF-beta-1. Interaction with integrins (ITGAV:ITGB6 or ITGAV:ITGB8) results in distortion of the Latency-associated peptide chain and subsequent release of the active TGF-beta-1. Functionally, transforming growth factor beta-1: Multifunctional protein that regulates the growth and differentiation of various cell types and is involved in various processes, such as normal development, immune function, microglia function and responses to neurodegeneration. Activation into mature form follows different steps: following cleavage of the proprotein in the Golgi apparatus, Latency-associated peptide (LAP) and Transforming growth factor beta-1 (TGF-beta-1) chains remain non-covalently linked rendering TGF-beta-1 inactive during storage in extracellular matrix. At the same time, LAP chain interacts with 'milieu molecules', such as ltbp1, lrrc32/garp and lrrc33/nrros that control activation of TGF-beta-1 and maintain it in a latent state during storage in extracellular milieus. TGF-beta-1 is released from LAP by integrins (ITGAV:ITGB6 or ITGAV:ITGB8): integrin-binding to LAP stabilizes an alternative conformation of the LAP bowtie tail and results in distortion of the LAP chain and subsequent release of the active TGF-beta-1. Once activated following release of LAP, TGF-beta-1 acts by binding to TGF-beta receptors (tgfbr1 and tgfbr2), which transduce signal. While expressed by many cells types, TGF-beta-1 only has a very localized range of action within cell environment thanks to fine regulation of its activation by Latency-associated peptide chain (LAP) and 'milieu molecules'. Plays an important role in bone remodeling: acts as a potent stimulator of osteoblastic bone formation. Can promote either T-helper 17 cells (Th17) or regulatory T-cells (Treg) lineage differentiation in a concentration-dependent manner. Can induce epithelial-to-mesenchymal transition (EMT) and cell migration in various cell types. The protein is Transforming growth factor beta-1 proprotein (tgfb1) of Xenopus laevis (African clawed frog).